The sequence spans 310 residues: uncharacterized protein (310 aa).

This is an uncharacterized protein from Acanthamoeba polyphaga (Amoeba).